A 284-amino-acid polypeptide reads, in one-letter code: uncharacterized protein (284 aa).

This is an uncharacterized protein from Methanothermobacter thermautotrophicus (Methanobacterium thermoformicicum).